Consider the following 206-residue polypeptide: Small ribosomal subunit protein uS4 (206 aa).

The region spanning 96–156 (GRLDNVVYRM…EKSKKQARIK (61 aa)) is the S4 RNA-binding domain.

This sequence belongs to the universal ribosomal protein uS4 family. Part of the 30S ribosomal subunit. Contacts protein S5. The interaction surface between S4 and S5 is involved in control of translational fidelity.

In terms of biological role, one of the primary rRNA binding proteins, it binds directly to 16S rRNA where it nucleates assembly of the body of the 30S subunit. Its function is as follows. With S5 and S12 plays an important role in translational accuracy. The chain is Small ribosomal subunit protein uS4 from Glaesserella parasuis serovar 5 (strain SH0165) (Haemophilus parasuis).